The following is a 176-amino-acid chain: Thiol-disulfide oxidoreductase ResA (176 aa).

The chain crosses the membrane as a helical; Signal-anchor for type II membrane protein span at residues 11 to 30 (LSILAVISVALGYTFYSNFF). Residues 36–176 (ARAGEQAVNF…EFMELIKPEA (141 aa)) enclose the Thioredoxin domain. Cysteines 74 and 77 form a disulfide.

The protein belongs to the thioredoxin family. ResA subfamily.

The protein resides in the cell membrane. It participates in protein modification; cytochrome c assembly. Thiol-disulfide oxidoreductase which is required in disulfide reduction during c-type cytochrome synthesis. May accept reducing equivalents from CcdA, leading to breakage of disulfide bonds in apocytochrome c; following this reduction heme can be covalently attached. This Halalkalibacterium halodurans (strain ATCC BAA-125 / DSM 18197 / FERM 7344 / JCM 9153 / C-125) (Bacillus halodurans) protein is Thiol-disulfide oxidoreductase ResA.